We begin with the raw amino-acid sequence, 209 residues long: Shikimate kinase (209 aa).

Residue 47-52 (GAGKTT) participates in ATP binding. Residue Thr51 coordinates Mg(2+). Substrate-binding residues include Asp69, Arg93, and Gly115. Arg153 contributes to the ATP binding site. Arg172 serves as a coordination point for substrate.

It belongs to the shikimate kinase family. Monomer. The cofactor is Mg(2+).

It is found in the cytoplasm. It carries out the reaction shikimate + ATP = 3-phosphoshikimate + ADP + H(+). It functions in the pathway metabolic intermediate biosynthesis; chorismate biosynthesis; chorismate from D-erythrose 4-phosphate and phosphoenolpyruvate: step 5/7. In terms of biological role, catalyzes the specific phosphorylation of the 3-hydroxyl group of shikimic acid using ATP as a cosubstrate. This Bordetella avium (strain 197N) protein is Shikimate kinase.